A 190-amino-acid polypeptide reads, in one-letter code: Tereporin-Ca1 (190 aa).

The interval T2–R21 is N-terminal region. Residues G78, S96, P98, Y131, and Y132 each contribute to the phosphocholine site. The Cell attachment site, crucial for protein stability signature appears at K138–E140.

The protein belongs to the actinoporin family. Conoidea subfamily. In terms of assembly, octamer or nonamer in membranes. Monomer in the soluble state. As to expression, expressed by the venom duct.

The protein resides in the secreted. Its subcellular location is the nematocyst. The protein localises to the target cell membrane. In terms of biological role, pore-forming protein that forms pores of around 1 nm and causes cardiac stimulation and cytolysis. The chain is Tereporin-Ca1 from Terebra anilis (Auger snail).